We begin with the raw amino-acid sequence, 520 residues long: 2-isopropylmalate synthase (520 aa).

One can recognise a Pyruvate carboxyltransferase domain in the interval 5 to 268 (VYIFDTTLRD…YTDVNTKEIY (264 aa)). Aspartate 14, histidine 202, histidine 204, and asparagine 238 together coordinate Mn(2+). The interval 394–520 (KVLHFQVQSG…RQEIREEGTV (127 aa)) is regulatory domain.

It belongs to the alpha-IPM synthase/homocitrate synthase family. LeuA type 1 subfamily. In terms of assembly, homodimer. Mn(2+) is required as a cofactor.

The protein localises to the cytoplasm. It carries out the reaction 3-methyl-2-oxobutanoate + acetyl-CoA + H2O = (2S)-2-isopropylmalate + CoA + H(+). It functions in the pathway amino-acid biosynthesis; L-leucine biosynthesis; L-leucine from 3-methyl-2-oxobutanoate: step 1/4. Catalyzes the condensation of the acetyl group of acetyl-CoA with 3-methyl-2-oxobutanoate (2-ketoisovalerate) to form 3-carboxy-3-hydroxy-4-methylpentanoate (2-isopropylmalate). The sequence is that of 2-isopropylmalate synthase from Aquifex aeolicus (strain VF5).